The following is a 683-amino-acid chain: Actin-binding LIM protein 3 (683 aa).

Met-1 is subject to N-acetylmethionine. LIM zinc-binding domains follow at residues 21-80, 80-140, 149-208, and 208-268; these read IQCY…LYGT, TRCD…MASS, SHCA…QFGI, and IKCE…ARAE. Ser-277, Ser-280, Ser-282, Ser-286, Ser-290, Ser-337, Ser-372, and Ser-373 each carry phosphoserine. Residues 372–472 are disordered; the sequence is SSPGYIDSPT…EDISQTSKYS (101 aa). Tyr-376 carries the post-translational modification Phosphotyrosine. Phosphoserine is present on residues Ser-379 and Ser-388. 3 stretches are compositionally biased toward polar residues: residues 380 to 393, 406 to 426, and 454 to 471; these read PTYS…TFSR, GRSS…TSYQ, and STAT…TSKY. Residues Ser-493, Ser-503, and Ser-504 each carry the phosphoserine modification. At Thr-543 the chain carries Phosphothreonine. Residues Ser-567, Ser-576, and Ser-607 each carry the phosphoserine modification. In terms of domain architecture, HP spans 615 to 683; it reads MREYKIYPYE…NELKKQARLF (69 aa). Arg-631 carries the post-translational modification Omega-N-methylarginine.

Directly interacts with F-actin and ABRA. As to expression, expressed predominantly in heart and brain.

The protein localises to the cytoplasm. Its function is as follows. May act as scaffold protein. May stimulate ABRA activity and ABRA-dependent SRF transcriptional activity. This chain is Actin-binding LIM protein 3 (ABLIM3), found in Homo sapiens (Human).